A 431-amino-acid chain; its full sequence is Enolase (431 aa).

Q166 is a (2R)-2-phosphoglycerate binding site. E208 serves as the catalytic Proton donor. Mg(2+)-binding residues include D245, E288, and D315. (2R)-2-phosphoglycerate contacts are provided by K340, R369, S370, and K391. The active-site Proton acceptor is the K340.

This sequence belongs to the enolase family. The cofactor is Mg(2+).

The protein resides in the cytoplasm. The protein localises to the secreted. It localises to the cell surface. The enzyme catalyses (2R)-2-phosphoglycerate = phosphoenolpyruvate + H2O. It functions in the pathway carbohydrate degradation; glycolysis; pyruvate from D-glyceraldehyde 3-phosphate: step 4/5. Catalyzes the reversible conversion of 2-phosphoglycerate (2-PG) into phosphoenolpyruvate (PEP). It is essential for the degradation of carbohydrates via glycolysis. This Clostridium botulinum (strain Eklund 17B / Type B) protein is Enolase.